Reading from the N-terminus, the 1067-residue chain is Chitinase-like protein C25A8.4 (1067 aa).

A signal peptide spans 1–18 (MGIKTLIWLSILVVGIYC). GH18 domains are found at residues 26–364 (PVHY…IRNT), 372–727 (CTRL…QVCQ), and 743–1067 (FVVS…HKCR). C30 and C51 are oxidised to a cystine. 2 N-linked (GlcNAc...) asparagine glycosylation sites follow: N47 and N216. A disulfide bond links C376 and C397. N-linked (GlcNAc...) asparagine glycosylation is found at N475, N538, and N710. A disulfide bridge links C747 with C768. N-linked (GlcNAc...) asparagine glycosylation is found at N797 and N830. The active-site Proton donor is the E855. 3 N-linked (GlcNAc...) asparagine glycosylation sites follow: N887, N933, and N1010.

It belongs to the glycosyl hydrolase 18 family.

It localises to the secreted. Putative chitinase. This Caenorhabditis elegans protein is Chitinase-like protein C25A8.4 (cht-3).